A 166-amino-acid polypeptide reads, in one-letter code: Peptidyl-prolyl cis-trans isomerase-like 1 (166 aa).

A PPIase cyclophilin-type domain is found at Gln-10 to Pro-164. Cyclosporin A contacts are provided by residues His-54–Gly-65, Thr-70–Gly-71, Ala-99–Gly-104, Gly-109–Phe-113, Thr-119, and Lys-125. Ser-149 carries the phosphoserine modification.

The protein belongs to the cyclophilin-type PPIase family. PPIL1 subfamily. As to quaternary structure, identified in the spliceosome C complex. Interacts with SNW1/SKIP. Interacts with CDC40/PRP17; this interaction leads to CDC40 isomerization. Interacts with RBM22.

It localises to the nucleus. The catalysed reaction is [protein]-peptidylproline (omega=180) = [protein]-peptidylproline (omega=0). Inhibited by Cyclosporin A. In terms of biological role, involved in pre-mRNA splicing as component of the spliceosome. PPIases accelerate the folding of proteins. It catalyzes the cis-trans isomerization of proline imidic peptide bonds in oligopeptides. Catalyzes prolyl peptide bond isomerization in CDC40/PRP17. Plays an important role in embryonic brain development; this function is independent of its isomerase activity. The sequence is that of Peptidyl-prolyl cis-trans isomerase-like 1 (Ppil1) from Mus musculus (Mouse).